A 207-amino-acid polypeptide reads, in one-letter code: Small ribosomal subunit protein uS4 (207 aa).

A disordered region spans residues 31–54; that stretch reads KCKLDTKPGQHGRTSGSRTSDYGN. Residues 42-53 show a composition bias toward polar residues; that stretch reads GRTSGSRTSDYG. The S4 RNA-binding domain occupies 97–158; it reads SRLDNVVYRM…KAKKQARITE (62 aa).

Belongs to the universal ribosomal protein uS4 family. Part of the 30S ribosomal subunit. Contacts protein S5. The interaction surface between S4 and S5 is involved in control of translational fidelity.

In terms of biological role, one of the primary rRNA binding proteins, it binds directly to 16S rRNA where it nucleates assembly of the body of the 30S subunit. With S5 and S12 plays an important role in translational accuracy. The sequence is that of Small ribosomal subunit protein uS4 from Polynucleobacter asymbioticus (strain DSM 18221 / CIP 109841 / QLW-P1DMWA-1) (Polynucleobacter necessarius subsp. asymbioticus).